The sequence spans 71 residues: Conotoxin TxMMSK-05 (71 aa).

The signal sequence occupies residues 1-20; that stretch reads MMSKLGALLIICLLLFPLTA. The propeptide occupies 21–52; it reads VPLDGDQHADRPAERLQDDISSKHHPMFDAVR. 3 disulfide bridges follow: C54–C70, C55–C66, and C60–C69.

The protein belongs to the conotoxin M superfamily. Expressed by the venom duct.

Its subcellular location is the secreted. The chain is Conotoxin TxMMSK-05 from Conus textile (Cloth-of-gold cone).